We begin with the raw amino-acid sequence, 725 residues long: Heme/hemopexin utilization protein C (725 aa).

An N-terminal signal peptide occupies residues 1–21 (MRFSKLSLAIATTLVTANALA). A TBDR plug domain is found at 36–147 (DPSRFAYTPE…LGGVVAMRTP (112 aa)). In terms of domain architecture, TBDR beta-barrel spans 158–725 (KFGVKIRQGY…NAKISAVYSF (568 aa)). A TonB C-terminal box motif is present at residues 708–725 (SLMEGTGRNAKISAVYSF).

Belongs to the TonB-dependent receptor family.

The protein resides in the cell outer membrane. Functionally, required for utilization of free heme at low concentrations. This is Heme/hemopexin utilization protein C (hxuC) from Haemophilus influenzae.